Reading from the N-terminus, the 43-residue chain is Protein PsbN (43 aa).

The chain crosses the membrane as a helical span at residues 3–23 (IATLVAIFISGLLVSFTGYAL).

This sequence belongs to the PsbN family.

It is found in the plastid. It localises to the chloroplast thylakoid membrane. Functionally, may play a role in photosystem I and II biogenesis. The polypeptide is Protein PsbN (Euonymus alatus (Burning bush)).